We begin with the raw amino-acid sequence, 273 residues long: SPbeta prophage-derived uncharacterized protein YomF (273 aa).

Positions 119–149 (VIETLQGLIDEAEDTIIRMNERIAECERVTK) form a coiled coil.

The sequence is that of SPbeta prophage-derived uncharacterized protein YomF (yomF) from Bacillus subtilis (strain 168).